The following is a 214-amino-acid chain: 2-phospho-L-lactate guanylyltransferase (214 aa).

This sequence belongs to the CofC family. Homodimer.

It catalyses the reaction (2S)-2-phospholactate + GTP + H(+) = (2S)-lactyl-2-diphospho-5'-guanosine + diphosphate. The protein operates within cofactor biosynthesis; coenzyme F420 biosynthesis. In terms of biological role, guanylyltransferase that catalyzes the activation of (2S)-2-phospholactate (2-PL) as (2S)-lactyl-2-diphospho-5'-guanosine, via the condensation of 2-PL with GTP. It is involved in the biosynthesis of coenzyme F420, a hydride carrier cofactor. The protein is 2-phospho-L-lactate guanylyltransferase of Methanoregula boonei (strain DSM 21154 / JCM 14090 / 6A8).